Consider the following 553-residue polypeptide: Expansin-like protein 7 (553 aa).

The signal sequence occupies residues 1 to 19 (MRLLGSLILTLSLIASAFS). N-linked (GlcNAc...) asparagine glycosylation is present at asparagine 39. The 99-residue stretch at 41 to 139 (SGSCEYGAYN…RKVSCDASGP (99 aa)) folds into the Expansin-like EG45 domain. Disulfide bonds link cysteine 44–cysteine 73 and cysteine 76–cysteine 134. Asparagine 276, asparagine 325, and asparagine 406 each carry an N-linked (GlcNAc...) asparagine glycan. Disordered stretches follow at residues 421 to 447 (GGSGASGVATSSHTGVSSSSSTASSTA) and 460 to 531 (SSSA…DEHH). 2 stretches are compositionally biased toward low complexity: residues 460-476 (SSSASSTSVSSTTAGGK) and 484-493 (ISTSGITGSG). Residues 497-516 (AASTSKTTSNPTGKTTGMTG) show a composition bias toward polar residues. Residues 520 to 531 (DHSESHSSDEHH) show a composition bias toward basic and acidic residues.

Belongs to the expansin family. Expansin A subfamily.

The protein localises to the secreted. In terms of biological role, may serve to lubricate the movement of the cellulose microfibrils during cell growth and wall extension and/or may serve to maintain the fluid state of the slug cell wall. Overexpression shows aberrant stalk formation. The chain is Expansin-like protein 7 (expl7) from Dictyostelium discoideum (Social amoeba).